Consider the following 475-residue polypeptide: Ribulose bisphosphate carboxylase large chain (475 aa).

Positions 1–2 (MA) are excised as a propeptide. Residue P3 is modified to N-acetylproline. N123 and T173 together coordinate substrate. K175 acts as the Proton acceptor in catalysis. K177 contributes to the substrate binding site. Positions 201, 203, and 204 each coordinate Mg(2+). K201 is subject to N6-carboxylysine. H294 functions as the Proton acceptor in the catalytic mechanism. Residues R295, H327, and S379 each contribute to the substrate site.

This sequence belongs to the RuBisCO large chain family. Type I subfamily. In terms of assembly, heterohexadecamer of 8 large chains and 8 small chains. Mg(2+) is required as a cofactor.

The protein resides in the plastid. It localises to the chloroplast. It catalyses the reaction 2 (2R)-3-phosphoglycerate + 2 H(+) = D-ribulose 1,5-bisphosphate + CO2 + H2O. The enzyme catalyses D-ribulose 1,5-bisphosphate + O2 = 2-phosphoglycolate + (2R)-3-phosphoglycerate + 2 H(+). Its function is as follows. RuBisCO catalyzes two reactions: the carboxylation of D-ribulose 1,5-bisphosphate, the primary event in carbon dioxide fixation, as well as the oxidative fragmentation of the pentose substrate in the photorespiration process. Both reactions occur simultaneously and in competition at the same active site. The sequence is that of Ribulose bisphosphate carboxylase large chain from Ostreococcus tauri.